The sequence spans 77 residues: MNNEKNVSFEFIGSTNEVDEIKVMACYAAGSICGEKRGYCSSDPGRYCPWQVVCYESRKICAKNAAKMRMNVTKNTI.

Residues 1–22 (MNNEKNVSFEFIGSTNEVDEIK) form the signal peptide. Cystine bridges form between Cys-26–Cys-61, Cys-33–Cys-48, and Cys-40–Cys-54.

Its subcellular location is the secreted. This chain is Pollen allergen Amb p 5b, found in Ambrosia psilostachya (Western ragweed).